Consider the following 161-residue polypeptide: Anther-specific protein LAT52 (161 aa).

Positions 1-17 are cleaved as a signal peptide; that stretch reads MAKAIVLLSALCILALA. 3 disulfides stabilise this stretch: cysteine 35–cysteine 106, cysteine 38–cysteine 147, and cysteine 59–cysteine 94. N-linked (GlcNAc...) asparagine glycosylation occurs at asparagine 61.

Belongs to the Ole e I family. As to expression, expressed in anthers and pollen.

Its function is as follows. May play a role during germination or early tube growth. The sequence is that of Anther-specific protein LAT52 (LAT52) from Solanum lycopersicum (Tomato).